The following is a 505-amino-acid chain: UDP-N-acetylmuramate--L-alanine ligase (505 aa).

Gly164–Thr170 lines the ATP pocket.

The protein belongs to the MurCDEF family.

It is found in the cytoplasm. It carries out the reaction UDP-N-acetyl-alpha-D-muramate + L-alanine + ATP = UDP-N-acetyl-alpha-D-muramoyl-L-alanine + ADP + phosphate + H(+). Its pathway is cell wall biogenesis; peptidoglycan biosynthesis. In terms of biological role, cell wall formation. The protein is UDP-N-acetylmuramate--L-alanine ligase of Synechocystis sp. (strain ATCC 27184 / PCC 6803 / Kazusa).